The primary structure comprises 681 residues: Probable L-type lectin-domain containing receptor kinase S.7 (681 aa).

The signal sequence occupies residues 1–21 (MSLSRKLLVIFFTWITALSMS). Over 22 to 305 (KPIFVSSDNM…PSKKRRHRHN (284 aa)) the chain is Extracellular. The legume-lectin like stretch occupies residues 30–265 (NMNFTFKSFT…IHLIENWSFK (236 aa)). Residues Asn-32, Asn-42, Asn-86, Asn-121, Asn-135, Asn-261, and Asn-281 are each glycosylated (N-linked (GlcNAc...) asparagine). The chain crosses the membrane as a helical span at residues 306–326 (LAIGLGISCPVLICLALFVFG). Residues 327 to 681 (YFTLKKWKSV…EGDSIVYVVS (355 aa)) are Cytoplasmic-facing. In terms of domain architecture, Protein kinase spans 365–643 (FHSSRVIGRG…RVLQILNNEI (279 aa)). ATP contacts are provided by residues 371-379 (IGRGAFGNV) and Lys-394. Asp-493 (proton acceptor) is an active-site residue.

The protein in the C-terminal section; belongs to the protein kinase superfamily. Ser/Thr protein kinase family. It in the N-terminal section; belongs to the leguminous lectin family.

Its subcellular location is the cell membrane. It catalyses the reaction L-seryl-[protein] + ATP = O-phospho-L-seryl-[protein] + ADP + H(+). It carries out the reaction L-threonyl-[protein] + ATP = O-phospho-L-threonyl-[protein] + ADP + H(+). Its function is as follows. Involved in resistance response to the pathogenic oomycetes Phytophthora infestans and Phytophthora capsici. The polypeptide is Probable L-type lectin-domain containing receptor kinase S.7 (Arabidopsis thaliana (Mouse-ear cress)).